The primary structure comprises 426 residues: 3-isopropylmalate dehydratase large subunit (426 aa).

The [4Fe-4S] cluster site is built by Cys307, Cys367, and Cys370.

It belongs to the aconitase/IPM isomerase family. LeuC type 2 subfamily. Heterodimer of LeuC and LeuD. The cofactor is [4Fe-4S] cluster.

It catalyses the reaction (2R,3S)-3-isopropylmalate = (2S)-2-isopropylmalate. It participates in amino-acid biosynthesis; L-leucine biosynthesis; L-leucine from 3-methyl-2-oxobutanoate: step 2/4. Catalyzes the isomerization between 2-isopropylmalate and 3-isopropylmalate, via the formation of 2-isopropylmaleate. This chain is 3-isopropylmalate dehydratase large subunit, found in Sulfurovum sp. (strain NBC37-1).